The sequence spans 527 residues: Tyrosine-protein kinase TXK (527 aa).

The disordered stretch occupies residues 58-81 (TQSNRGGVQPSKRKPLPPLPQEPP). The region spanning 82–142 (DERIQVKALY…PSNYVTENRL (61 aa)) is the SH3 domain. Tyr-91 is modified (phosphotyrosine; by autocatalysis). In terms of domain architecture, SH2 spans 150 to 246 (WYHKNITRNQ…GLISRLRYPI (97 aa)). Residues 271–527 (LAFVKEIGSG…QVLTEIAETW (257 aa)) enclose the Protein kinase domain. Residues 277 to 285 (IGSGQFGVV) and Lys-299 contribute to the ATP site. Asp-390 functions as the Proton acceptor in the catalytic mechanism. A Phosphotyrosine; by FYN and autocatalysis modification is found at Tyr-420.

The protein belongs to the protein kinase superfamily. Tyr protein kinase family. TEC subfamily. Interacts with PARP1 and EEF1A1. Interacts with SH2D2A. Interacts with FYN. Phosphorylated at Tyr-420 by FYN. Autophosphorylation at Tyr-91 is critical for the activation of TXK, leading to the up-regulation of IFN-gamma gene transcription. Post-translationally, the cysteine string at the N-terminus is palmitoylated and required for the proper subcellular location. As to expression, expressed in early thymocytes, T-cells and mast cells.

It localises to the cytoplasm. Its subcellular location is the nucleus. The protein resides in the cell membrane. It carries out the reaction L-tyrosyl-[protein] + ATP = O-phospho-L-tyrosyl-[protein] + ADP + H(+). With respect to regulation, activated by phosphorylation by FYN. Non-receptor tyrosine kinase that plays a redundant role with ITK in regulation of the adaptive immune response. Regulates the development, function and differentiation of conventional T-cells and nonconventional NKT-cells. When antigen presenting cells (APC) activate T-cell receptor (TCR), a series of phosphorylation leads to the recruitment of TXK to the cell membrane, where it is phosphorylated at Tyr-420. Phosphorylation leads to TXK full activation. Also contributes to signaling from many receptors and participates in multiple downstream pathways, including regulation of the actin cytoskeleton. Like ITK, can phosphorylate PLCG1, leading to its localization in lipid rafts and activation, followed by subsequent cleavage of its substrates. In turn, the endoplasmic reticulum releases calcium in the cytoplasm and the nuclear activator of activated T-cells (NFAT) translocates into the nucleus to perform its transcriptional duty. Plays a role in the positive regulation of IFNG transcription in T-helper 1 cells as part of an IFNG promoter-binding complex with PARP1 and EEF1A1. Within the complex, phosphorylates both PARP1 and EEF1A1. Also phosphorylates key sites in LCP2 leading to the up-regulation of Th1 preferred cytokine IL-2. Phosphorylates 'Tyr-201' of CTLA4 which leads to the association of PI-3 kinase with the CTLA4 receptor. In Mus musculus (Mouse), this protein is Tyrosine-protein kinase TXK (Txk).